A 217-amino-acid polypeptide reads, in one-letter code: Octanoyltransferase (217 aa).

Positions 32 to 207 (SESPDELWIV…TFSQLLGYQH (176 aa)) constitute a BPL/LPL catalytic domain. Residues 71 to 78 (RGGQVTYH), 138 to 140 (SLG), and 151 to 153 (GLA) contribute to the substrate site. Cys-169 acts as the Acyl-thioester intermediate in catalysis.

It belongs to the LipB family.

It is found in the cytoplasm. The enzyme catalyses octanoyl-[ACP] + L-lysyl-[protein] = N(6)-octanoyl-L-lysyl-[protein] + holo-[ACP] + H(+). It functions in the pathway protein modification; protein lipoylation via endogenous pathway; protein N(6)-(lipoyl)lysine from octanoyl-[acyl-carrier-protein]: step 1/2. Catalyzes the transfer of endogenously produced octanoic acid from octanoyl-acyl-carrier-protein onto the lipoyl domains of lipoate-dependent enzymes. Lipoyl-ACP can also act as a substrate although octanoyl-ACP is likely to be the physiological substrate. The polypeptide is Octanoyltransferase (Shewanella sp. (strain W3-18-1)).